Reading from the N-terminus, the 378-residue chain is MDFYRLLLRPLLLSQLNVDPEWLTRNALGFLATLARSRSPLAANLRSYLRQTYGFQDPRLAMSLWGLTFATPVGLAAGFDKDGIAAPLWSDLGFGFAELGTVTALAQPGNPRPRLFRIPQDLAAFNRMGFNNASAEALADTLRGYFPEGQRSIPIGINLGKSKLTPLSGAVSDYVSSFRSLRSLGDYFVVNVSSPNTPGLRSLQAVTELEPILAALQAENTEQRPLLLKIAPDLVDEEVVAIAHLAQRQQLAGIIATNTTIDKSLLSVEHLPGRREPLATEAGGISGAPLRSRSTEVIRLLHRTTQGQLPIIGVGGIFSAEDAWQKIVAGASLVQVYTGWVYEGPLLVKTIQQGLLERLDSAGLPNLAAAVGSAAIDS.

FMN-binding positions include 77–81 (AGFDK) and threonine 101. Residue lysine 81 participates in substrate binding. 126–130 (NRMGF) contributes to the substrate binding site. Positions 158 and 191 each coordinate FMN. Asparagine 191 serves as a coordination point for substrate. Serine 194 acts as the Nucleophile in catalysis. Position 196 (asparagine 196) interacts with substrate. FMN is bound by residues lysine 229 and threonine 257. Residue 258–259 (NT) coordinates substrate. Residues glycine 287, glycine 316, and 337–338 (YT) each bind FMN.

It belongs to the dihydroorotate dehydrogenase family. Type 2 subfamily. In terms of assembly, monomer. FMN is required as a cofactor.

It localises to the cell membrane. It carries out the reaction (S)-dihydroorotate + a quinone = orotate + a quinol. It functions in the pathway pyrimidine metabolism; UMP biosynthesis via de novo pathway; orotate from (S)-dihydroorotate (quinone route): step 1/1. Catalyzes the conversion of dihydroorotate to orotate with quinone as electron acceptor. This Synechococcus elongatus (strain ATCC 33912 / PCC 7942 / FACHB-805) (Anacystis nidulans R2) protein is Dihydroorotate dehydrogenase (quinone).